A 96-amino-acid chain; its full sequence is Large ribosomal subunit protein uL23 (96 aa).

This sequence belongs to the universal ribosomal protein uL23 family. As to quaternary structure, part of the 50S ribosomal subunit. Contacts protein L29, and trigger factor when it is bound to the ribosome.

Its function is as follows. One of the early assembly proteins it binds 23S rRNA. One of the proteins that surrounds the polypeptide exit tunnel on the outside of the ribosome. Forms the main docking site for trigger factor binding to the ribosome. In Alkaliphilus oremlandii (strain OhILAs) (Clostridium oremlandii (strain OhILAs)), this protein is Large ribosomal subunit protein uL23.